We begin with the raw amino-acid sequence, 499 residues long: Maturase K (499 aa).

Belongs to the intron maturase 2 family. MatK subfamily.

It is found in the plastid. The protein localises to the chloroplast. Its function is as follows. Usually encoded in the trnK tRNA gene intron. Probably assists in splicing its own and other chloroplast group II introns. This is Maturase K from Gleditsia triacanthos (Common honey-locust).